Here is a 140-residue protein sequence, read N- to C-terminus: Large ribosomal subunit protein uL11 (140 aa).

Belongs to the universal ribosomal protein uL11 family. As to quaternary structure, part of the ribosomal stalk of the 50S ribosomal subunit. Interacts with L10 and the large rRNA to form the base of the stalk. L10 forms an elongated spine to which L12 dimers bind in a sequential fashion forming a multimeric L10(L12)X complex. In terms of processing, one or more lysine residues are methylated.

Its function is as follows. Forms part of the ribosomal stalk which helps the ribosome interact with GTP-bound translation factors. This Geobacter sp. (strain M21) protein is Large ribosomal subunit protein uL11.